The following is a 61-amino-acid chain: [Val1,Thr6]-bradykinyl-Val,Asp (61 aa).

The signal sequence occupies residues 1–22 (MAFLKKSLFLVLFLGVVSLSFC). A propeptide spanning residues 23–48 (EEEEREEHEEEKREAEAAESAENLIS) is cleaved from the precursor. The tract at residues 27 to 61 (REEHEEEKREAEAAESAENLISKRVPPGFTPFRVD) is disordered.

Expressed by the skin glands. Expression levels in inguinal glands and granular glands are virtually the same.

The protein resides in the secreted. Induces contraction of rat ileum smooth muscle (EC(50)=2.73 uM) but has no activity towards rat smooth muscle from tail artery, urinary bladder or uterus. Binds to both bradykinin receptor B1 (BDKRB1) and B2 (BDKRB2); the effect via BDKRB1 is stronger. This is [Val1,Thr6]-bradykinyl-Val,Asp from Physalaemus nattereri (Cuyaba dwarf frog).